The sequence spans 198 residues: Putative undecaprenyl-diphosphatase YbjG (198 aa).

Topologically, residues 1 to 27 (MLENLNLSLFSLINATPDSAPWMISLA) are cytoplasmic. The helical transmembrane segment at 28–48 (IFIAKDLITVVPLLAVVLWLW) threads the bilayer. At 49–57 (GLTAQRQLV) the chain is on the periplasmic side. A helical membrane pass occupies residues 58–78 (IKIAIALAVSLFVSWTMGHLF). At 79–120 (PHDRPFVENIGYNFLHHAADDSFPSDHGTVIFTFALAFLCWH) the chain is on the cytoplasmic side. The helical transmembrane segment at 121–143 (RLWSGSLLMVLAVVIAWSRVYLG) threads the bilayer. The Periplasmic segment spans residues 144-149 (VHWPLD). Residues 150–172 (MLGGLLAGMIGCLSAQIIWQAMG) form a helical membrane-spanning segment. The Cytoplasmic portion of the chain corresponds to 173–198 (HKLYQRLQSWYRVCFALPIRKGWVRD).

It belongs to the BcrC/YbjG family.

It localises to the cell inner membrane. It carries out the reaction di-trans,octa-cis-undecaprenyl diphosphate + H2O = di-trans,octa-cis-undecaprenyl phosphate + phosphate + H(+). In terms of biological role, overexpression leads to increased undecaprenyl diphosphatase activity and to increased resistance to bacitracin. May have a preferred substrate other than undecaprenyl diphosphate in vivo. This chain is Putative undecaprenyl-diphosphatase YbjG (ybjG), found in Escherichia coli (strain K12).